Consider the following 157-residue polypeptide: Protein Smg homolog (157 aa).

It belongs to the Smg family.

This Colwellia psychrerythraea (strain 34H / ATCC BAA-681) (Vibrio psychroerythus) protein is Protein Smg homolog.